A 160-amino-acid chain; its full sequence is Cytochrome b6-f complex subunit 4 (160 aa).

The next 3 membrane-spanning stretches (helical) occupy residues 36-56, 95-115, and 131-151; these read LLYV…ALAV, LLGI…PFIE, and AVFL…TFPI.

This sequence belongs to the cytochrome b family. PetD subfamily. As to quaternary structure, the 4 large subunits of the cytochrome b6-f complex are cytochrome b6, subunit IV (17 kDa polypeptide, PetD), cytochrome f and the Rieske protein, while the 4 small subunits are PetG, PetL, PetM and PetN. The complex functions as a dimer.

The protein resides in the cellular thylakoid membrane. In terms of biological role, component of the cytochrome b6-f complex, which mediates electron transfer between photosystem II (PSII) and photosystem I (PSI), cyclic electron flow around PSI, and state transitions. This is Cytochrome b6-f complex subunit 4 from Rippkaea orientalis (strain PCC 8801 / RF-1) (Cyanothece sp. (strain PCC 8801)).